The primary structure comprises 367 residues: Pre-small/secreted glycoprotein (367 aa).

The signal sequence occupies residues 1 to 33; sequence MGSGYQLLQLPRERFRKTSFLVWVIILFQRAIS. N-linked (GlcNAc...) asparagine; by host glycosylation is present at asparagine 41. 2 cysteine pairs are disulfide-bonded: cysteine 109/cysteine 136 and cysteine 122/cysteine 148. 5 N-linked (GlcNAc...) asparagine; by host glycosylation sites follow: asparagine 205, asparagine 229, asparagine 239, asparagine 258, and asparagine 269.

Belongs to the filoviruses glycoprotein family. In terms of assembly, homodimer; disulfide-linked. The homodimers are linked by two disulfide bonds in a parallel orientation. Monomer. In terms of processing, this precursor is processed into mature sGP and delta-peptide by host furin or furin-like proteases. The cleavage site corresponds to the furin optimal cleavage sequence [KR]-X-[KR]-R. N-glycosylated. Post-translationally, O-glycosylated.

The protein resides in the secreted. Functionally, seems to possess an anti-inflammatory activity as it can reverse the barrier-decreasing effects of TNF alpha. Might therefore contribute to the lack of inflammatory reaction seen during infection in spite the of extensive necrosis and massive virus production. Does not seem to be involved in activation of primary macrophages. Does not seem to interact specifically with neutrophils. Its function is as follows. Viroporin that permeabilizes mammalian cell plasma membranes. It acts by altering permeation of ionic compounds and small molecules. This activity may lead to viral enterotoxic activity. The chain is Pre-small/secreted glycoprotein (GP) from Epomops franqueti (Franquet's epauletted fruit bat).